Consider the following 89-residue polypeptide: Large ribosomal subunit protein bL27 (89 aa).

The interval 1–21 is disordered; that stretch reads MAHKKAGGSSRNGRDSESKRL.

The protein belongs to the bacterial ribosomal protein bL27 family.

This Brucella anthropi (strain ATCC 49188 / DSM 6882 / CCUG 24695 / JCM 21032 / LMG 3331 / NBRC 15819 / NCTC 12168 / Alc 37) (Ochrobactrum anthropi) protein is Large ribosomal subunit protein bL27.